A 185-amino-acid polypeptide reads, in one-letter code: Vomeronasal secretory protein 2 (185 aa).

An N-terminal signal peptide occupies residues 1-19; that stretch reads MKSLLLTVTLSSLVATLQT. A disulfide bridge links Cys-80 with Cys-172.

The protein belongs to the calycin superfamily. Lipocalin family. As to expression, specifically expressed in vomeronasal and posterior glands of the nasal septum, the ducts of which open into the lumen of the vomeronasal organ.

The protein resides in the secreted. Its function is as follows. Transport of lipophilic molecules, possible pheromone-carrier. The protein is Vomeronasal secretory protein 2 (Lcn4) of Mus musculus (Mouse).